A 946-amino-acid chain; its full sequence is Bifunctional glutamine synthetase adenylyltransferase/adenylyl-removing enzyme (946 aa).

The tract at residues 1-440 (MKPLSSPLQQ…VFNELIGDDE (440 aa)) is adenylyl removase. Residues 449-946 (SEQWRELWQD…ASWQKWLVEE (498 aa)) are adenylyl transferase.

It belongs to the GlnE family. It depends on Mg(2+) as a cofactor.

The catalysed reaction is [glutamine synthetase]-O(4)-(5'-adenylyl)-L-tyrosine + phosphate = [glutamine synthetase]-L-tyrosine + ADP. The enzyme catalyses [glutamine synthetase]-L-tyrosine + ATP = [glutamine synthetase]-O(4)-(5'-adenylyl)-L-tyrosine + diphosphate. In terms of biological role, involved in the regulation of glutamine synthetase GlnA, a key enzyme in the process to assimilate ammonia. When cellular nitrogen levels are high, the C-terminal adenylyl transferase (AT) inactivates GlnA by covalent transfer of an adenylyl group from ATP to specific tyrosine residue of GlnA, thus reducing its activity. Conversely, when nitrogen levels are low, the N-terminal adenylyl removase (AR) activates GlnA by removing the adenylyl group by phosphorolysis, increasing its activity. The regulatory region of GlnE binds the signal transduction protein PII (GlnB) which indicates the nitrogen status of the cell. This is Bifunctional glutamine synthetase adenylyltransferase/adenylyl-removing enzyme from Shigella boydii serotype 4 (strain Sb227).